Consider the following 83-residue polypeptide: NAD(P)H-quinone oxidoreductase subunit L (83 aa).

Helical transmembrane passes span 15-35 (LLVLLAYTVLGGLYLVVVPLA) and 53-73 (LGIYGMVFFFFPGMILFAPFL).

This sequence belongs to the complex I NdhL subunit family. NDH-1 can be composed of about 15 different subunits; different subcomplexes with different compositions have been identified which probably have different functions.

Its subcellular location is the cellular thylakoid membrane. The enzyme catalyses a plastoquinone + NADH + (n+1) H(+)(in) = a plastoquinol + NAD(+) + n H(+)(out). It catalyses the reaction a plastoquinone + NADPH + (n+1) H(+)(in) = a plastoquinol + NADP(+) + n H(+)(out). In terms of biological role, NDH-1 shuttles electrons from an unknown electron donor, via FMN and iron-sulfur (Fe-S) centers, to quinones in the respiratory and/or the photosynthetic chain. The immediate electron acceptor for the enzyme in this species is believed to be plastoquinone. Couples the redox reaction to proton translocation, and thus conserves the redox energy in a proton gradient. Cyanobacterial NDH-1 also plays a role in inorganic carbon-concentration. In Synechococcus sp. (strain CC9605), this protein is NAD(P)H-quinone oxidoreductase subunit L.